The following is a 163-amino-acid chain: Probable chemoreceptor glutamine deamidase CheD (163 aa).

The protein belongs to the CheD family.

It carries out the reaction L-glutaminyl-[protein] + H2O = L-glutamyl-[protein] + NH4(+). Functionally, probably deamidates glutamine residues to glutamate on methyl-accepting chemotaxis receptors (MCPs), playing an important role in chemotaxis. The sequence is that of Probable chemoreceptor glutamine deamidase CheD from Borreliella burgdorferi (strain ATCC 35210 / DSM 4680 / CIP 102532 / B31) (Borrelia burgdorferi).